The chain runs to 269 residues: Energy-coupling factor transporter ATP-binding protein EcfA1 (269 aa).

In terms of domain architecture, ABC transporter spans 8 to 242 (IVFKNVSFQY…AEELTTIGLD (235 aa)). Residue 42-49 (GHNGSGKS) participates in ATP binding.

The protein belongs to the ABC transporter superfamily. Energy-coupling factor EcfA family. In terms of assembly, forms a stable energy-coupling factor (ECF) transporter complex composed of 2 membrane-embedded substrate-binding proteins (S component), 2 ATP-binding proteins (A component) and 2 transmembrane proteins (T component).

The protein resides in the cell membrane. Functionally, ATP-binding (A) component of a common energy-coupling factor (ECF) ABC-transporter complex. Unlike classic ABC transporters this ECF transporter provides the energy necessary to transport a number of different substrates. This chain is Energy-coupling factor transporter ATP-binding protein EcfA1, found in Staphylococcus aureus (strain MRSA252).